Here is a 304-residue protein sequence, read N- to C-terminus: uncharacterized protein (304 aa).

The protein belongs to the histone deacetylase family.

Putative deacetylase. This is an uncharacterized protein from Synechocystis sp. (strain ATCC 27184 / PCC 6803 / Kazusa).